We begin with the raw amino-acid sequence, 189 residues long: 3-hydroxyanthranilate 3,4-dioxygenase (189 aa).

Position 50 (Arg50) interacts with O2. Fe cation contacts are provided by His54, Glu60, and His102. Glu60 contributes to the substrate binding site. Substrate is bound by residues Arg106 and Glu116. A divalent metal cation-binding residues include Cys131, Cys136, Cys170, and Cys173.

It belongs to the 3-HAO family. The cofactor is Fe(2+).

It is found in the cytoplasm. It carries out the reaction 3-hydroxyanthranilate + O2 = (2Z,4Z)-2-amino-3-carboxymuconate 6-semialdehyde. It participates in cofactor biosynthesis; NAD(+) biosynthesis; quinolinate from L-kynurenine: step 3/3. Catalyzes the oxidative ring opening of 3-hydroxyanthranilate to 2-amino-3-carboxymuconate semialdehyde, which spontaneously cyclizes to quinolinate. The chain is 3-hydroxyanthranilate 3,4-dioxygenase (bna1) from Aspergillus niger (strain ATCC MYA-4892 / CBS 513.88 / FGSC A1513).